The following is a 351-amino-acid chain: MALPFQKGLEKYKNIDEDELLGKLSEEELKQLENVLDDLDPESATLPAGFRQKDQTQKAATGPFDREHLLMYLEKEALEQKDREDFVPFTGEKKGRVFIPKEKPVETRKEEKVTLDPELEEALASASDTELYDLAAVLGVHNLLNNPKFDEETTNGEGRKGPVRNVVKGEKAKPVFEEPPNPTNVEASLQQMKANDPSLQEVNLNNIKNIPIPTLKEFAKSLETNTHVKKFSLAATRSNDPVALAFAEMLKVNKTLKSLNVESNFITGTGILALVEALRENDTLTEIKIDNQRQQLGTAVEMEIAQMLEENSRILKFGYQFTKQGPRTRVAAAITKNNDLVRKKRVEGDRR.

Ser-25 is subject to Phosphoserine.

This sequence belongs to the tropomodulin family. As to quaternary structure, binds to the N-terminus of tropomyosin and to actin. Neuronal-tissue specific.

The protein localises to the cytoplasm. It localises to the cytoskeleton. Its function is as follows. Blocks the elongation and depolymerization of the actin filaments at the pointed end. The Tmod/TM complex contributes to the formation of the short actin protofilament, which in turn defines the geometry of the membrane skeleton. The chain is Tropomodulin-2 (Tmod2) from Mus musculus (Mouse).